The following is a 422-amino-acid chain: IMP-specific 5'-nucleotidase 1 (422 aa).

ATP is bound by residues arginine 106 and histidine 124. Aspartate 146 functions as the Nucleophile in the catalytic mechanism. IMP-binding residues include aspartate 146, aspartate 148, aspartate 154, threonine 182, aspartate 348, and lysine 356. Mg(2+) is bound by residues aspartate 146 and aspartate 148. Aspartate 148 acts as the Proton donor in catalysis. Aspartate 383 provides a ligand contact to Mg(2+).

Belongs to the ISN1 family. In terms of assembly, homotetramer. Requires Mg(2+) as cofactor.

The enzyme catalyses IMP + H2O = inosine + phosphate. With respect to regulation, allosterically activated by ATP. ATP binding is a prerequisite to magnesium and substrate binding. ATP binds to 2 of the subunits in the homotetramer inducing a closure of these 2 subunits and the release of the C-terminal loop, thereby activating the enzyme. IMP-specific 5'-nucleotidase involved in IMP (inositol monophosphate) degradation. The chain is IMP-specific 5'-nucleotidase 1 (ISN1) from Kluyveromyces lactis (strain ATCC 8585 / CBS 2359 / DSM 70799 / NBRC 1267 / NRRL Y-1140 / WM37) (Yeast).